Here is a 201-residue protein sequence, read N- to C-terminus: Large ribosomal subunit protein bL25 (201 aa).

The protein belongs to the bacterial ribosomal protein bL25 family. CTC subfamily. Part of the 50S ribosomal subunit; part of the 5S rRNA/L5/L18/L25 subcomplex. Contacts the 5S rRNA. Binds to the 5S rRNA independently of L5 and L18.

Its function is as follows. This is one of the proteins that binds to the 5S RNA in the ribosome where it forms part of the central protuberance. This is Large ribosomal subunit protein bL25 from Burkholderia cenocepacia (strain HI2424).